The sequence spans 241 residues: Small ribosomal subunit protein eS4 (241 aa).

The S4 RNA-binding domain occupies 37 to 100 (LPIVVWARDQ…GKHYRILRDK (64 aa)).

It belongs to the eukaryotic ribosomal protein eS4 family.

The sequence is that of Small ribosomal subunit protein eS4 from Methanospirillum hungatei JF-1 (strain ATCC 27890 / DSM 864 / NBRC 100397 / JF-1).